We begin with the raw amino-acid sequence, 343 residues long: UDP-3-O-acylglucosamine N-acyltransferase (343 aa).

H239 functions as the Proton acceptor in the catalytic mechanism.

This sequence belongs to the transferase hexapeptide repeat family. LpxD subfamily. Homotrimer.

The catalysed reaction is a UDP-3-O-[(3R)-3-hydroxyacyl]-alpha-D-glucosamine + a (3R)-hydroxyacyl-[ACP] = a UDP-2-N,3-O-bis[(3R)-3-hydroxyacyl]-alpha-D-glucosamine + holo-[ACP] + H(+). Its pathway is bacterial outer membrane biogenesis; LPS lipid A biosynthesis. Catalyzes the N-acylation of UDP-3-O-acylglucosamine using 3-hydroxyacyl-ACP as the acyl donor. Is involved in the biosynthesis of lipid A, a phosphorylated glycolipid that anchors the lipopolysaccharide to the outer membrane of the cell. This Vibrio vulnificus (strain YJ016) protein is UDP-3-O-acylglucosamine N-acyltransferase.